Consider the following 246-residue polypeptide: Ubiquinone biosynthesis O-methyltransferase (246 aa).

S-adenosyl-L-methionine-binding residues include arginine 44, glycine 63, aspartate 84, and methionine 128.

The protein belongs to the methyltransferase superfamily. UbiG/COQ3 family.

It carries out the reaction a 3-demethylubiquinol + S-adenosyl-L-methionine = a ubiquinol + S-adenosyl-L-homocysteine + H(+). The catalysed reaction is a 3-(all-trans-polyprenyl)benzene-1,2-diol + S-adenosyl-L-methionine = a 2-methoxy-6-(all-trans-polyprenyl)phenol + S-adenosyl-L-homocysteine + H(+). It participates in cofactor biosynthesis; ubiquinone biosynthesis. In terms of biological role, O-methyltransferase that catalyzes the 2 O-methylation steps in the ubiquinone biosynthetic pathway. This chain is Ubiquinone biosynthesis O-methyltransferase, found in Xylella fastidiosa (strain Temecula1 / ATCC 700964).